Consider the following 381-residue polypeptide: (S)-scoulerine 9-O-methyltransferase (381 aa).

S-adenosyl-L-methionine is bound by residues G223, E246, D266, M267, and K280. The active-site Proton acceptor is H284.

Belongs to the class I-like SAM-binding methyltransferase superfamily. Cation-independent O-methyltransferase family. COMT subfamily.

It catalyses the reaction (S)-scoulerine + S-adenosyl-L-methionine = (S)-tetrahydrocolumbamine + S-adenosyl-L-homocysteine + H(+). Functionally, produces a precursor of protoberberine alkaloids. This Coptis japonica (Japanese goldthread) protein is (S)-scoulerine 9-O-methyltransferase (SMT).